Reading from the N-terminus, the 227-residue chain is Acyl-protein thioesterase 1 (227 aa).

Residues S119, D173, and H207 each act as charge relay system in the active site.

This sequence belongs to the AB hydrolase superfamily. AB hydrolase 2 family.

The protein resides in the cytoplasm. It is found in the nucleus. It catalyses the reaction S-hexadecanoyl-L-cysteinyl-[protein] + H2O = L-cysteinyl-[protein] + hexadecanoate + H(+). Functionally, hydrolyzes fatty acids from S-acylated cysteine residues in proteins with a strong preference for palmitoylated G-alpha proteins over other acyl substrates. Mediates the deacylation of G-alpha proteins such as GPA1 in vivo, but has weak or no activity toward palmitoylated Ras proteins. Has weak lysophospholipase activity in vitro; however such activity may not exist in vivo. The protein is Acyl-protein thioesterase 1 of Saccharomyces cerevisiae (strain ATCC 204508 / S288c) (Baker's yeast).